We begin with the raw amino-acid sequence, 470 residues long: Ribosomal protein uS12 methylthiotransferase RimO (470 aa).

The 112-residue stretch at 20 to 131 (PTVAFAHLGC…IVEVLQQVEA (112 aa)) folds into the MTTase N-terminal domain. Residues Cys29, Cys65, Cys94, Cys169, Cys173, and Cys176 each contribute to the [4Fe-4S] cluster site. The Radical SAM core domain occupies 155-384 (TTGEAVAYLK…MTLQQPISAA (230 aa)). One can recognise a TRAM domain in the interval 387 to 458 (ASWIGKTVDV…IYDLSGHVVS (72 aa)).

Belongs to the methylthiotransferase family. RimO subfamily. The cofactor is [4Fe-4S] cluster.

It is found in the cytoplasm. The catalysed reaction is L-aspartate(89)-[ribosomal protein uS12]-hydrogen + (sulfur carrier)-SH + AH2 + 2 S-adenosyl-L-methionine = 3-methylsulfanyl-L-aspartate(89)-[ribosomal protein uS12]-hydrogen + (sulfur carrier)-H + 5'-deoxyadenosine + L-methionine + A + S-adenosyl-L-homocysteine + 2 H(+). In terms of biological role, catalyzes the methylthiolation of an aspartic acid residue of ribosomal protein uS12. The protein is Ribosomal protein uS12 methylthiotransferase RimO of Synechococcus sp. (strain CC9311).